The following is a 150-amino-acid chain: Small ribosomal subunit protein uS11y (150 aa).

A Phosphoserine modification is found at serine 19.

It belongs to the universal ribosomal protein uS11 family.

It localises to the cytoplasm. This Arabidopsis thaliana (Mouse-ear cress) protein is Small ribosomal subunit protein uS11y (RPS14B).